The chain runs to 282 residues: Putative 4-diphosphocytidyl-2-C-methyl-D-erythritol kinase (282 aa).

K9 is a catalytic residue. 93–103 is a binding site for ATP; sequence PVSAGLAGGSA. D135 is an active-site residue.

The protein belongs to the GHMP kinase family. IspE subfamily.

It carries out the reaction 4-CDP-2-C-methyl-D-erythritol + ATP = 4-CDP-2-C-methyl-D-erythritol 2-phosphate + ADP + H(+). In terms of biological role, catalyzes the phosphorylation of the position 2 hydroxy group of 4-diphosphocytidyl-2C-methyl-D-erythritol. This is Putative 4-diphosphocytidyl-2-C-methyl-D-erythritol kinase from Staphylococcus aureus (strain MRSA252).